The sequence spans 937 residues: Hyphally-regulated protein (937 aa).

A signal peptide spans M1–A20. N16 is a glycosylation site (N-linked (GlcNAc...) asparagine). The chain crosses the membrane as a helical span at residues V42–L62. N-linked (GlcNAc...) asparagine glycosylation is present at N236. Positions S332–S483 are disordered. Positions T344–T392 are enriched in low complexity. Positions N393–G414 are enriched in polar residues. Low complexity predominate over residues S415–S475. 6 N-linked (GlcNAc...) asparagine glycosylation sites follow: N449, N488, N580, N585, N595, and N603. The segment covering D567–N590 has biased composition (low complexity). Residues D567 to E857 form a disordered region. Residues H591–S609 are compositionally biased toward gly residues. Copy 1 of the repeat occupies N610–S613. The segment at N610–S753 is 7 X 4 AA repeats of N-E-G-S. 4 N-linked (GlcNAc...) asparagine glycosylation sites follow: N619, N631, N641, and N649. Gly residues-rich tracts occupy residues N619 to N631 and N641 to S665. 4 tandem repeats follow at residues N666–S669, N680–S683, N690–S693, and N698–S701. Residues N666–G682 show a composition bias toward low complexity. Gly residues predominate over residues E699–S725. An N-linked (GlcNAc...) asparagine glycan is attached at N711. The span at Q726 to N742 shows a compositional bias: low complexity. Repeat unit 6 spans residues N738–S741. Positions P743 to S801 are enriched in gly residues. N747 carries N-linked (GlcNAc...) asparagine glycosylation. The stretch at N750 to S753 is repeat 7. Residues N759 and N773 are each glycosylated (N-linked (GlcNAc...) asparagine). Residues E802–N814 are compositionally biased toward low complexity. Residues A817–S829 show a composition bias toward basic and acidic residues. The span at A841–P851 shows a compositional bias: polar residues. N-linked (GlcNAc...) asparagine glycosylation is found at N897 and N913. The GPI-anchor amidated asparagine moiety is linked to residue N913. Residues G914–M937 constitute a propeptide, removed in mature form.

It localises to the cell membrane. It is found in the secreted. The protein resides in the cell wall. Nonessential component of the hyphal cell wall. The protein is Hyphally-regulated protein (HYR1) of Candida albicans (Yeast).